A 71-amino-acid chain; its full sequence is Alpha-elapitoxin-Nn3a (71 aa).

5 disulfides stabilise this stretch: C3–C20, C14–C42, C26–C30, C46–C56, and C57–C62.

This sequence belongs to the three-finger toxin family. Long-chain subfamily. Type II alpha-neurotoxin sub-subfamily. Expressed by the venom gland.

It localises to the secreted. In terms of biological role, nicotinic acetylcholine receptor antagonist. Binds to muscle nicotinic acetylcholine receptor (nAChR) and inhibits acetylcholine from binding to the receptor, thereby impairing neuromuscular transmission. Produces peripheral paralysis by blocking neuromuscular transmission at the postsynaptic site. Induces concentration-dependent inhibition of indirect twitches and abolishes contractile responses of tissues to exogenous acetylcholine and carbachol, in the chick biventer cervicis nerve-muscle preparation at 100-300 nM (in vitro). Prior incubation of tissues with Indian polyvalent antivenom (1 ml/0.6 mg) prevents the neurotoxic effects at 100 nM (in vitro). Addition of Indian polyvalent antivenom (1 ml/0.6 mg) at the t90 time point partially restores the neurotoxic effects (in vitro). Displays a reversible antagonism of concentration-response curves to carbachol, with a pA2 of 8.17 (in vitro). This Naja naja (Indian cobra) protein is Alpha-elapitoxin-Nn3a.